Consider the following 59-residue polypeptide: Arabinogalactan protein 13 (59 aa).

Positions 1–27 are cleaved as a signal peptide; that stretch reads MEAMKMRLFVAVLVAAMAFSAVQQAAA. P31, P33, and P35 each carry 4-hydroxyproline. P31, P33, and P35 each carry an O-linked (Ara...) hydroxyproline glycan. S37 carries GPI-anchor amidated serine lipidation. Residues 38-59 constitute a propeptide, removed in mature form; the sequence is DASLAIPAFFASVATLAFGFLF.

It belongs to the AG-peptide AGP family. Post-translationally, contains 4-hydroxyproline; hydroxylated on Pro-31, Pro-33 and Pro-35. In terms of processing, O-glycosylated on hydroxyprolines; noncontiguous hydroxylproline residues are glycosylated with arabinogalactan.

Its subcellular location is the cell membrane. Proteoglycan that seems to be implicated in diverse developmental roles such as differentiation, cell-cell recognition, embryogenesis and programmed cell death. The sequence is that of Arabinogalactan protein 13 from Arabidopsis thaliana (Mouse-ear cress).